Here is a 296-residue protein sequence, read N- to C-terminus: Uracil phosphoribosyltransferase, chloroplastic (296 aa).

The transit peptide at 1–61 (MACSIGNAFR…SSSLSRRTIR (61 aa)) directs the protein to the chloroplast. N-acetylalanine is present on A2. GTP is bound at residue 148–151 (REPI). 5-phospho-alpha-D-ribose 1-diphosphate-binding positions include R158, R183, D211, 216–219 (TGGT), and D282. A uracil-binding site is contributed by 281-283 (GDA).

Belongs to the UPRTase family. Requires Mg(2+) as cofactor.

It localises to the plastid. It is found in the chloroplast. It catalyses the reaction UMP + diphosphate = 5-phospho-alpha-D-ribose 1-diphosphate + uracil. The protein operates within pyrimidine metabolism; UMP biosynthesis via salvage pathway; UMP from uracil: step 1/1. Allosterically activated by GTP. Uracil phosphoribosyltransferase (UPRT) that catalyzes the conversion of uracil and 5-phospho-alpha-D-ribose 1-diphosphate (PRPP) to UMP and diphosphate. Is probably the only functional UPRT, since the dual-domain proteins of the UKL family seem to lack this activity. In Arabidopsis thaliana (Mouse-ear cress), this protein is Uracil phosphoribosyltransferase, chloroplastic (UPP).